The sequence spans 220 residues: MRNSLTMVGTFWAFLSLVTAVASSTSYFLPYWLFGSQLGKPVSFSTFRRCNYPVRGDGHNLIMVEECGRYASFTAIPSLAWQMCTVVTGAGCALLLLVALAAVLGCCMEELISRMMGRCMGAAQFVGGLLISAGCALYPLGWNSPEVMQTCGNVSNQFQLGTCRLGWAYYCAGGGAAAAMLICTWLSCFAGRNPKPVMLVENIMRNTNSYALELDHCLKP.

An N-terminal signal peptide occupies residues 1–20 (MRNSLTMVGTFWAFLSLVTA). 2 helical membrane-spanning segments follow: residues 86 to 106 (VVTG…VLGC) and 122 to 142 (AAQF…PLGW). Residue Asn-153 is glycosylated (N-linked (GlcNAc...) asparagine). The chain crosses the membrane as a helical span at residues 165 to 185 (LGWAYYCAGGGAAAAMLICTW).

It belongs to the LHFP family. Widely expressed. Strongly expressed in vagina and ovary. Weakly expressed in spleen, kidney, thymus, testis, brain, lung, intestine and uterus.

The protein resides in the membrane. In Mus musculus (Mouse), this protein is LHFPL tetraspan subfamily member 1 protein.